The sequence spans 381 residues: Succinyl-diaminopimelate desuccinylase (381 aa).

His68 is a binding site for Zn(2+). Residue Asp70 is part of the active site. Zn(2+) is bound at residue Asp101. Glu135 (proton acceptor) is an active-site residue. Residues Glu136, Glu164, and His350 each contribute to the Zn(2+) site.

It belongs to the peptidase M20A family. DapE subfamily. Homodimer. Zn(2+) serves as cofactor. The cofactor is Co(2+).

The catalysed reaction is N-succinyl-(2S,6S)-2,6-diaminopimelate + H2O = (2S,6S)-2,6-diaminopimelate + succinate. It functions in the pathway amino-acid biosynthesis; L-lysine biosynthesis via DAP pathway; LL-2,6-diaminopimelate from (S)-tetrahydrodipicolinate (succinylase route): step 3/3. Catalyzes the hydrolysis of N-succinyl-L,L-diaminopimelic acid (SDAP), forming succinate and LL-2,6-diaminopimelate (DAP), an intermediate involved in the bacterial biosynthesis of lysine and meso-diaminopimelic acid, an essential component of bacterial cell walls. The protein is Succinyl-diaminopimelate desuccinylase of Neisseria meningitidis serogroup C (strain 053442).